Reading from the N-terminus, the 397-residue chain is Purine ribonucleoside efflux pump NepI (397 aa).

Residues 1–21 (MNENIAEKFRADGVARPNWSA) lie on the Cytoplasmic side of the membrane. Residues 22–42 (VFAVAFCVACLITVEFLPVSL) form a helical membrane-spanning segment. Topologically, residues 43–54 (LTPMAQDLGISE) are periplasmic. Residues 55–75 (GVAGQSVTVTAFVAMFSSLFI) form a helical membrane-spanning segment. Over 76–85 (TQIIQATDRR) the chain is Cytoplasmic. A helical membrane pass occupies residues 86-106 (YIVILFAVLLTASCLMVSFAN). Residue S107 is a topological domain, periplasmic. A helical transmembrane segment spans residues 108-128 (FTLLLLGRACLGLALGGFWAI). The Cytoplasmic portion of the chain corresponds to 129 to 147 (SASLTMRLVPARTVPKALS). Residues 148 to 168 (VIFGAVSIALVIAAPLGSFLG) form a helical membrane-spanning segment. At 169–175 (GIIGWRN) the chain is on the periplasmic side. A helical membrane pass occupies residues 176 to 196 (VFNAAAVMGVLCVIWVVKSLP). Over 197–215 (SLPGEPSHQKQNMFSLLQR) the chain is Cytoplasmic. The helical transmembrane segment at 216 to 236 (PGVMAGMIAIFMSFAGQFAFF) threads the bilayer. Over 237 to 255 (TYIRPVYMNLAGFDVDGLT) the chain is Periplasmic. A helical transmembrane segment spans residues 256–276 (LVLLSFGIASFVGTSFSSYVL). Topologically, residues 277-281 (KRSVK) are cytoplasmic. A helical membrane pass occupies residues 282-302 (LALAGAPLLLALSALTLIVWG). Residues 303 to 305 (SDK) are Periplasmic-facing. The helical transmembrane segment at 306 to 326 (TVAAAIAIIWGLAFALVPVGW) threads the bilayer. Topologically, residues 327 to 343 (STWITRSLADQAEKAGS) are cytoplasmic. A helical transmembrane segment spans residues 344–364 (IQVAVIQLANTCGAAVGGYAL). The Periplasmic segment spans residues 365–366 (DN). The helical transmembrane segment at 367-387 (FGLLSPLALSGGLMLLTALVV) threads the bilayer. Residues 388–397 (AAKVRITPMS) lie on the Cytoplasmic side of the membrane.

It belongs to the major facilitator superfamily. DHA1 family. NepI (TC 2.A.1.2.26) subfamily.

Its subcellular location is the cell inner membrane. It catalyses the reaction inosine(in) + H(+)(out) = inosine(out) + H(+)(in). The enzyme catalyses guanosine(in) + H(+)(out) = guanosine(out) + H(+)(in). Functionally, involved in the efflux of purine ribonucleosides, such as inosine and guanosine. The polypeptide is Purine ribonucleoside efflux pump NepI (Salmonella paratyphi A (strain ATCC 9150 / SARB42)).